Here is a 377-residue protein sequence, read N- to C-terminus: Succinyl-diaminopimelate desuccinylase (377 aa).

H67 provides a ligand contact to Zn(2+). D69 is an active-site residue. D100 lines the Zn(2+) pocket. Residue E134 is the Proton acceptor of the active site. The Zn(2+) site is built by E135, E163, and H349.

The protein belongs to the peptidase M20A family. DapE subfamily. As to quaternary structure, homodimer. It depends on Zn(2+) as a cofactor. Requires Co(2+) as cofactor.

It catalyses the reaction N-succinyl-(2S,6S)-2,6-diaminopimelate + H2O = (2S,6S)-2,6-diaminopimelate + succinate. The protein operates within amino-acid biosynthesis; L-lysine biosynthesis via DAP pathway; LL-2,6-diaminopimelate from (S)-tetrahydrodipicolinate (succinylase route): step 3/3. Catalyzes the hydrolysis of N-succinyl-L,L-diaminopimelic acid (SDAP), forming succinate and LL-2,6-diaminopimelate (DAP), an intermediate involved in the bacterial biosynthesis of lysine and meso-diaminopimelic acid, an essential component of bacterial cell walls. This is Succinyl-diaminopimelate desuccinylase from Buchnera aphidicola subsp. Baizongia pistaciae (strain Bp).